We begin with the raw amino-acid sequence, 397 residues long: MNTATSQPRRLTILGSTGSIGTNTLDVIRQMGGRDRFDIMALTGHGNVALLAEQALVTGARLAVTSDENQYIALKDLLSGSGIDVAAGSSGLQEAACLEADWVMAAIVGTAGLQPTLTAAARGADIALANKECLVSAGELFIETVRKGGGKIIPVDSEHSAIFQCLDENHRDTLERIVLTASGGPFRTFTRQQMADVSVQTARAHPNWSMGLKVSIGSASMFNKALEMIEAKHLFDLTPDQIEVIVHPQSIIHSMVGYSDGSVLAQLGVPDMRTAIGYALSYPKRAALDVDRLDFTKLARLDFEAPDLDRFPAIRLARTALERGGLQGAVLNAAEECAFEAFVEEKIGFLAMADVVEDVMDHLSGLAPATVIADVFAADAQARRRAQEVILNQGRTR.

NADPH contacts are provided by Thr17, Gly18, Ser19, Ile20, Asn47, and Asn130. Lys131 is a 1-deoxy-D-xylulose 5-phosphate binding site. Glu132 contributes to the NADPH binding site. Asp156 serves as a coordination point for Mn(2+). Residues Ser157, Glu158, Ser182, and His205 each contribute to the 1-deoxy-D-xylulose 5-phosphate site. Residue Glu158 participates in Mn(2+) binding. Position 211 (Gly211) interacts with NADPH. 1-deoxy-D-xylulose 5-phosphate contacts are provided by Ser218, Asn223, Lys224, and Glu227. Glu227 is a Mn(2+) binding site.

This sequence belongs to the DXR family. It depends on Mg(2+) as a cofactor. Mn(2+) serves as cofactor.

The catalysed reaction is 2-C-methyl-D-erythritol 4-phosphate + NADP(+) = 1-deoxy-D-xylulose 5-phosphate + NADPH + H(+). It functions in the pathway isoprenoid biosynthesis; isopentenyl diphosphate biosynthesis via DXP pathway; isopentenyl diphosphate from 1-deoxy-D-xylulose 5-phosphate: step 1/6. In terms of biological role, catalyzes the NADPH-dependent rearrangement and reduction of 1-deoxy-D-xylulose-5-phosphate (DXP) to 2-C-methyl-D-erythritol 4-phosphate (MEP). The protein is 1-deoxy-D-xylulose 5-phosphate reductoisomerase of Allorhizobium ampelinum (strain ATCC BAA-846 / DSM 112012 / S4) (Agrobacterium vitis (strain S4)).